Here is a 211-residue protein sequence, read N- to C-terminus: Thymidylate kinase (211 aa).

11–18 (GPDGAGKT) lines the ATP pocket.

This sequence belongs to the thymidylate kinase family.

It carries out the reaction dTMP + ATP = dTDP + ADP. Its function is as follows. Phosphorylation of dTMP to form dTDP in both de novo and salvage pathways of dTTP synthesis. The sequence is that of Thymidylate kinase from Streptococcus pyogenes serotype M18 (strain MGAS8232).